The sequence spans 364 residues: Dihydroorotate dehydrogenase (quinone) (364 aa).

Residues 62 to 66 (AGFDK) and Thr-86 contribute to the FMN site. Lys-66 serves as a coordination point for substrate. Position 111–115 (111–115 (NRMGF)) interacts with substrate. FMN is bound by residues Asn-142 and Asn-175. Asn-175 serves as a coordination point for substrate. Ser-178 acts as the Nucleophile in catalysis. Asn-180 contacts substrate. Residues Lys-216 and Thr-244 each coordinate FMN. A substrate-binding site is contributed by 245–246 (NT). Residues Gly-267, Gly-296, and 317–318 (YT) contribute to the FMN site.

Belongs to the dihydroorotate dehydrogenase family. Type 2 subfamily. Monomer. The cofactor is FMN.

It is found in the cell membrane. The enzyme catalyses (S)-dihydroorotate + a quinone = orotate + a quinol. Its pathway is pyrimidine metabolism; UMP biosynthesis via de novo pathway; orotate from (S)-dihydroorotate (quinone route): step 1/1. Functionally, catalyzes the conversion of dihydroorotate to orotate with quinone as electron acceptor. This is Dihydroorotate dehydrogenase (quinone) from Anaeromyxobacter dehalogenans (strain 2CP-C).